Consider the following 331-residue polypeptide: 3'-5' exonuclease (331 aa).

The segment at 27–92 is disordered; sequence ERVKQTNAAK…EDGPASPEKE (66 aa). Over residues 31-43 the composition is skewed to polar residues; it reads QTNAAKKQIATNN. Positions 47–67 are enriched in basic and acidic residues; the sequence is KNQDTPEMIKDKENAESENPP. Phosphoserine is present on residues Ser-80 and Ser-88. The 3'-5' exonuclease domain maps to 118-290; that stretch reads SADEVMQWVE…IGQVIYREIE (173 aa). Mg(2+) is bound by residues Asp-140, Glu-142, and Asp-278.

This sequence belongs to the WRNexo family.

It is found in the nucleus. Its function is as follows. Has exonuclease activity on both single-stranded and duplex templates bearing overhangs, but not blunt ended duplex DNA, and cleaves in a 3'-5' direction. Essential for the formation of DNA replication focal centers. Has an important role in maintaining genome stability. This is 3'-5' exonuclease from Drosophila grimshawi (Hawaiian fruit fly).